The chain runs to 167 residues: Small ribosomal subunit protein uS5 (167 aa).

Residues 11-74 (LQEKLIAVNR…EKARRNMINV (64 aa)) form the S5 DRBM domain.

It belongs to the universal ribosomal protein uS5 family. Part of the 30S ribosomal subunit. Contacts proteins S4 and S8.

With S4 and S12 plays an important role in translational accuracy. In terms of biological role, located at the back of the 30S subunit body where it stabilizes the conformation of the head with respect to the body. The polypeptide is Small ribosomal subunit protein uS5 (Shigella dysenteriae serotype 1 (strain Sd197)).